The sequence spans 371 residues: tRNA-specific 2-thiouridylase MnmA (371 aa).

ATP contacts are provided by residues 24–31 and L50; that span reads AMSGGVDS. Catalysis depends on C120, which acts as the Nucleophile. C120 and C216 are disulfide-bonded. G144 lines the ATP pocket. The tract at residues 166 to 168 is interaction with tRNA; sequence KDQ. The active-site Cysteine persulfide intermediate is C216.

The protein belongs to the MnmA/TRMU family.

It is found in the cytoplasm. It carries out the reaction S-sulfanyl-L-cysteinyl-[protein] + uridine(34) in tRNA + AH2 + ATP = 2-thiouridine(34) in tRNA + L-cysteinyl-[protein] + A + AMP + diphosphate + H(+). Catalyzes the 2-thiolation of uridine at the wobble position (U34) of tRNA, leading to the formation of s(2)U34. This chain is tRNA-specific 2-thiouridylase MnmA, found in Wolbachia sp. subsp. Brugia malayi (strain TRS).